Reading from the N-terminus, the 245-residue chain is Uridylate kinase (245 aa).

16 to 19 contacts ATP; sequence KLSG. Position 58 (G58) interacts with UMP. ATP-binding residues include G59 and R63. Residues D78 and 139–146 each bind UMP; that span reads TGNPFFTT. Residues T166, Y172, and D175 each coordinate ATP.

It belongs to the UMP kinase family. As to quaternary structure, homohexamer.

Its subcellular location is the cytoplasm. It catalyses the reaction UMP + ATP = UDP + ADP. It functions in the pathway pyrimidine metabolism; CTP biosynthesis via de novo pathway; UDP from UMP (UMPK route): step 1/1. Its activity is regulated as follows. Inhibited by UTP. Catalyzes the reversible phosphorylation of UMP to UDP. The chain is Uridylate kinase from Idiomarina loihiensis (strain ATCC BAA-735 / DSM 15497 / L2-TR).